Here is a 483-residue protein sequence, read N- to C-terminus: Macrophage receptor MARCO (483 aa).

The Cytoplasmic segment spans residues Met1–Phe48. The helical; Signal-anchor for type II membrane protein transmembrane segment at Cys49–Leu69 threads the bilayer. At Lys70 to Arg483 the chain is on the extracellular side. Residues Asn85 and Asn137 are each glycosylated (N-linked (GlcNAc...) asparagine). The disordered stretch occupies residues Arg146–Phe386. In terms of domain architecture, Collagen-like spans Lys148 to Gly383. Low complexity predominate over residues Ser153 to Lys166. Over residues Lys193–Asp216 the composition is skewed to basic and acidic residues. The span at Val273 to Lys286 shows a compositional bias: low complexity. Positions Lys376–Phe386 are enriched in basic and acidic residues. An SRCR domain is found at Val389–Arg483. 3 disulfides stabilise this stretch: Cys412/Cys472, Cys425/Cys482, and Cys452/Cys462.

In terms of assembly, homotrimer; disulfide-linked. Trimers may assemble in larger oligomers thus resulting in the creation of a large surface capable of interacting with very large ligands. N-glycosylated. Expressed in alveolar macrophages, macrophages of lymph node sinues, and Kupffer cells in liver (at protein level).

The protein localises to the cell membrane. Pattern recognition receptor (PRR) which binds Gram-positive and Gram-negative bacteria. Also plays a role in binding of unopsonized particles by alveolar macrophages. Binds to the secretoglobin SCGB3A2. This is Macrophage receptor MARCO (MARCO) from Mesocricetus auratus (Golden hamster).